The sequence spans 369 residues: Anhydro-N-acetylmuramic acid kinase (369 aa).

An ATP-binding site is contributed by 9 to 16; it reads GTSLDAVD.

It belongs to the anhydro-N-acetylmuramic acid kinase family.

The enzyme catalyses 1,6-anhydro-N-acetyl-beta-muramate + ATP + H2O = N-acetyl-D-muramate 6-phosphate + ADP + H(+). It participates in amino-sugar metabolism; 1,6-anhydro-N-acetylmuramate degradation. Its pathway is cell wall biogenesis; peptidoglycan recycling. In terms of biological role, catalyzes the specific phosphorylation of 1,6-anhydro-N-acetylmuramic acid (anhMurNAc) with the simultaneous cleavage of the 1,6-anhydro ring, generating MurNAc-6-P. Is required for the utilization of anhMurNAc either imported from the medium or derived from its own cell wall murein, and thus plays a role in cell wall recycling. The protein is Anhydro-N-acetylmuramic acid kinase of Phenylobacterium zucineum (strain HLK1).